We begin with the raw amino-acid sequence, 97 residues long: U6-theraphotoxin-Hhn1a 2 (97 aa).

The first 33 residues, 1 to 33 (MLIKQFSRRPKNMKVQILLAFAALFVLAVGSYA), serve as a signal peptide directing secretion. Residues 34 to 61 (SESKKLDLRDASFSAMFSADYQLNPQER) constitute a propeptide that is removed on maturation. Intrachain disulfides connect C63–C77, C70–C82, and C76–C89.

The protein belongs to the neurotoxin 10 (Hwtx-1) family. 12 (Hntx-12) subfamily. In terms of tissue distribution, expressed by the venom gland.

The protein localises to the secreted. Ion channel inhibitor. This is U6-theraphotoxin-Hhn1a 2 from Cyriopagopus hainanus (Chinese bird spider).